Here is a 21-residue protein sequence, read N- to C-terminus: FLPKMSTKLRVPYRRGTKDYH.

Expressed by the venom gland.

It localises to the secreted. Functionally, antimicrobial peptide against both Gram-positive, -negative and yeast. Also induces histamine release by mast cells and shows moderate hemolytic activities against both human and rabbit red cells. The polypeptide is Antimicrobial peptide scolopin-1 (Scolopendra mutilans (Chinese red-headed centipede)).